The following is a 321-amino-acid chain: Cytochrome c biogenesis protein CcsA (321 aa).

8 helical membrane-spanning segments follow: residues 17-37, 43-63, 71-91, 98-118, 143-163, 225-245, 258-275, and 286-306; these read IVSI…IVGL, KGMI…WIYS, LYES…VPKI, LSAI…SGLL, MVLS…LLVI, VISL…VWAN, ETWA…LHTR, and AIVA…VNLL.

This sequence belongs to the CcmF/CycK/Ccl1/NrfE/CcsA family. As to quaternary structure, may interact with Ccs1.

The protein localises to the plastid. Its subcellular location is the chloroplast thylakoid membrane. In terms of biological role, required during biogenesis of c-type cytochromes (cytochrome c6 and cytochrome f) at the step of heme attachment. This chain is Cytochrome c biogenesis protein CcsA, found in Platanus occidentalis (Sycamore).